The chain runs to 175 residues: Ribulose bisphosphate carboxylase small subunit, chloroplastic 2 (175 aa).

The transit peptide at 1–46 (MAPTVMASSATSVAPFQGLKSTAGLPVSRRSTNSGFGNVSNGGRIK) directs the protein to the chloroplast.

Belongs to the RuBisCO small chain family. As to quaternary structure, heterohexadecamer of 8 large and 8 small subunits.

The protein resides in the plastid. It localises to the chloroplast. Functionally, ruBisCO catalyzes two reactions: the carboxylation of D-ribulose 1,5-bisphosphate, the primary event in carbon dioxide fixation, as well as the oxidative fragmentation of the pentose substrate. Both reactions occur simultaneously and in competition at the same active site. Although the small subunit is not catalytic it is essential for maximal activity. The protein is Ribulose bisphosphate carboxylase small subunit, chloroplastic 2 of Oryza sativa subsp. japonica (Rice).